The primary structure comprises 513 residues: MQLNSTEISDLIKQRIEQFEVVSETRNEGTIVAVSDGIIRIHGLADVMQGEMIELPGNRFAIALNLERDSVGAVVMGPYASLAEGDKVKTTGRILEVPVGNGLLGRVVNTLGEPIDGKGPIEHDGFSPVEVIAPGVIERKSVDQPVQTGYKAVDSMIPIGRGQRELIIGDRQIGKTALAIDAIINQKDSGIKCVYVAVGQKASTIANVVRKLDEHGALANTIVVVATASEAAALQYLAPYSGCSMGEYFRDRGEDSLIVYDDLSKQAVAYRQISLLLKRPPGREAYPGDVFYLHSRLLERASRVNAEYVEKFTKGEVKGRTGSLTALPIIETQAGDVSAFVPTNVISITDGQIFLETDLFNSGLRPAVNPGISVSRVGGAAQTKIIKKLSGGIRTALAQYRELAAFSQFASDLDDATRAQLEHGERVTELMKQKQYAPMSIADQSVSLFAAEKGYLKSIELAKIGDFEASLLSFMNSEHAELMKTINDTGSYNADIEGELKASLDKFVETQTW.

169–176 (GDRQIGKT) provides a ligand contact to ATP.

This sequence belongs to the ATPase alpha/beta chains family. As to quaternary structure, F-type ATPases have 2 components, CF(1) - the catalytic core - and CF(0) - the membrane proton channel. CF(1) has five subunits: alpha(3), beta(3), gamma(1), delta(1), epsilon(1). CF(0) has three main subunits: a(1), b(2) and c(9-12). The alpha and beta chains form an alternating ring which encloses part of the gamma chain. CF(1) is attached to CF(0) by a central stalk formed by the gamma and epsilon chains, while a peripheral stalk is formed by the delta and b chains.

It localises to the cell inner membrane. It catalyses the reaction ATP + H2O + 4 H(+)(in) = ADP + phosphate + 5 H(+)(out). Functionally, produces ATP from ADP in the presence of a proton gradient across the membrane. The alpha chain is a regulatory subunit. This Shewanella sediminis (strain HAW-EB3) protein is ATP synthase subunit alpha.